Reading from the N-terminus, the 371-residue chain is MYNENPIKRRASTRIYVGDVPIGDGAPIAVQSMTNTLTTDVDATVAQIRALENVGADIVRVSVPTMDAAEAFKLIKQQTNIPLIADIHFDYRIALKVAEYGVDCLRINPGNIGNESRIKSVVECARDKNIPIRIGINGGSLEKDLMDKYKEPTPEALLESAMRHVDILDRLNFDQFKVSVKASDVFLAVEAYRLLAKQIVQPLHLGITEAGGLRSGSVKSSVGLGMLLAEGIGDTLRISLAADPVEEIKVGFDILKSLRIRSRGINFIACPSCSRQEFDVINTVNELERRLEDVITPMDVSIIGCVVNGPGEALVSDIGLTGGNRKSGYFDDGVRQKERFDNDNIVDSLEAKIRAKASIINGRIPVQDLNK.

The [4Fe-4S] cluster site is built by cysteine 270, cysteine 273, cysteine 305, and glutamate 312.

It belongs to the IspG family. [4Fe-4S] cluster is required as a cofactor.

The enzyme catalyses (2E)-4-hydroxy-3-methylbut-2-enyl diphosphate + oxidized [flavodoxin] + H2O + 2 H(+) = 2-C-methyl-D-erythritol 2,4-cyclic diphosphate + reduced [flavodoxin]. It participates in isoprenoid biosynthesis; isopentenyl diphosphate biosynthesis via DXP pathway; isopentenyl diphosphate from 1-deoxy-D-xylulose 5-phosphate: step 5/6. Functionally, converts 2C-methyl-D-erythritol 2,4-cyclodiphosphate (ME-2,4cPP) into 1-hydroxy-2-methyl-2-(E)-butenyl 4-diphosphate. The protein is 4-hydroxy-3-methylbut-2-en-1-yl diphosphate synthase (flavodoxin) of Shewanella woodyi (strain ATCC 51908 / MS32).